A 270-amino-acid chain; its full sequence is 3-methyl-2-oxobutanoate hydroxymethyltransferase (270 aa).

Positions 42 and 86 each coordinate Mg(2+). 3-methyl-2-oxobutanoate is bound by residues 42 to 43 (DS), aspartate 86, and lysine 116. Glutamate 118 contributes to the Mg(2+) binding site. Catalysis depends on glutamate 185, which acts as the Proton acceptor.

This sequence belongs to the PanB family. In terms of assembly, homodecamer; pentamer of dimers. Mg(2+) serves as cofactor.

It is found in the cytoplasm. The enzyme catalyses 3-methyl-2-oxobutanoate + (6R)-5,10-methylene-5,6,7,8-tetrahydrofolate + H2O = 2-dehydropantoate + (6S)-5,6,7,8-tetrahydrofolate. Its pathway is cofactor biosynthesis; (R)-pantothenate biosynthesis; (R)-pantoate from 3-methyl-2-oxobutanoate: step 1/2. Its function is as follows. Catalyzes the reversible reaction in which hydroxymethyl group from 5,10-methylenetetrahydrofolate is transferred onto alpha-ketoisovalerate to form ketopantoate. This chain is 3-methyl-2-oxobutanoate hydroxymethyltransferase, found in Synechococcus sp. (strain CC9902).